Reading from the N-terminus, the 687-residue chain is Transketolase 2 (687 aa).

His-47 is a binding site for substrate. Thiamine diphosphate-binding positions include His-87 and 135 to 137 (GPL). A Mg(2+)-binding site is contributed by Asp-176. Residues Gly-177 and Asn-206 each contribute to the thiamine diphosphate site. Asn-206 and Ile-208 together coordinate Mg(2+). Residues His-282, Arg-379, and Ser-406 each contribute to the substrate site. His-282 serves as a coordination point for thiamine diphosphate. Glu-432 serves as the catalytic Proton donor. Phe-458 serves as a coordination point for thiamine diphosphate. Residues His-482, Asp-490, His-494, and Arg-541 each contribute to the substrate site.

This sequence belongs to the transketolase family. Mg(2+) is required as a cofactor. Requires thiamine diphosphate as cofactor.

It catalyses the reaction D-sedoheptulose 7-phosphate + D-glyceraldehyde 3-phosphate = aldehydo-D-ribose 5-phosphate + D-xylulose 5-phosphate. With respect to regulation, activity is increased sixfold following autotrophic growth on methanol compared with that of heterotrophically grown cells. Its function is as follows. Catalyzes the transfer of a two-carbon ketol group from a ketose donor to an aldose acceptor, via a covalent intermediate with the cofactor thiamine pyrophosphate. The chain is Transketolase 2 from Xanthobacter flavus.